Reading from the N-terminus, the 376-residue chain is Thiol-disulfide oxidoreductase LTO1 (376 aa).

Residues 1–45 (MMARFVSVSSCQFHFGFREVSPPSVTSYPRRFEVSDRRFPAIPIK) constitute a chloroplast transit peptide. The segment at 44 to 77 (IKCSSSEPENGEDSAPSLSSSSSSSTSEVSTSNS) is disordered. The Stromal portion of the chain corresponds to 46 to 81 (CSSSEPENGEDSAPSLSSSSSSSTSEVSTSNSSTYN). The span at 57–77 (SAPSLSSSSSSSTSEVSTSNS) shows a compositional bias: low complexity. A helical membrane pass occupies residues 82-102 (WYTGIGGIGMLDTAYLTYLKV). Residues 103–125 (TGSDAFCPIGGGTCGDVLNSDYA) are Lumenal-facing. An intrachain disulfide couples C109 to C116. The helical transmembrane segment at 126–146 (VVFGVPLPVIGFVMYGVVTAL) threads the bilayer. The Stromal segment spans residues 147–165 (SAELGEGNLPFGISKSNGR). A helical membrane pass occupies residues 166–186 (FALFGITTAMASASAYFLYIL). At 187-192 (STKLSG) the chain is on the lumenal side. A helical transmembrane segment spans residues 193-213 (SSCLYCLVSAFLSFSLFFLSV). Residues C195 and C198 are joined by a disulfide bond. Residues 214–223 (KDVKLQEIQQ) are Stromal-facing. Residues 224 to 244 (VVGLQICLAIIVVASLTASYS) traverse the membrane as a helical segment. Residues 245–376 (TAQPIPSRSG…DQANETNQLQ (132 aa)) are Lumenal-facing. Cystine bridges form between C293–C296 and C316–C331.

It belongs to the VKOR family. As to quaternary structure, interacts with the PSII subunits PSBO1 and PSBO2. Interacts with TL17, TL20.3, HCF164, PETJ, VDE1, EDA3, FKBP13 and FKBP20-2. As to expression, expressed in cotyledons, rosette leaves, stems, cauline leaves and flowers.

It is found in the plastid. It localises to the chloroplast thylakoid membrane. In terms of biological role, thiol-disulfide oxidoreductase catalyzing disulfide bond formation of chloroplast proteins and involved in redox regulation and photosynthetic electron transport. Required for the assembly of photosystem II (PSII) through the formation of disulfide bond in PSBO, a subunit of the PSII oxygen-evolving complex in the thylakoid lumen. Involved in the formation of disulfide bonds in the lumenal protein FKBP13. In vitro, reduces phylloquinone (vitamin K1) and menaquinone (vitamin K2) to their respective quinol. Cannot reduce phylloquinone epoxide to phylloquinone. Plays an important role in regulating the thylakoid lumen redox. This chain is Thiol-disulfide oxidoreductase LTO1, found in Arabidopsis thaliana (Mouse-ear cress).